Here is a 274-residue protein sequence, read N- to C-terminus: Diaminopimelate epimerase (274 aa).

Residues Asn-13, Gln-45, and Asn-63 each coordinate substrate. Cys-72 (proton donor) is an active-site residue. Substrate is bound by residues 73–74 (GN), Asn-158, Asn-191, and 209–210 (ER). The active-site Proton acceptor is the Cys-218. Residue 219–220 (GT) coordinates substrate.

This sequence belongs to the diaminopimelate epimerase family. In terms of assembly, homodimer.

Its subcellular location is the cytoplasm. It carries out the reaction (2S,6S)-2,6-diaminopimelate = meso-2,6-diaminopimelate. The protein operates within amino-acid biosynthesis; L-lysine biosynthesis via DAP pathway; DL-2,6-diaminopimelate from LL-2,6-diaminopimelate: step 1/1. In terms of biological role, catalyzes the stereoinversion of LL-2,6-diaminopimelate (L,L-DAP) to meso-diaminopimelate (meso-DAP), a precursor of L-lysine and an essential component of the bacterial peptidoglycan. The protein is Diaminopimelate epimerase of Pelagibacter ubique (strain HTCC1062).